A 192-amino-acid polypeptide reads, in one-letter code: Lipid A acyltransferase PagP (192 aa).

Residues 1-29 (MVVNVVIVAKKYFLFITLLIIQVSLPAHA) form the signal peptide. Catalysis depends on residues His-64, Asp-107, and Ser-108.

This sequence belongs to the lipid A palmitoyltransferase family. Homodimer.

It is found in the cell outer membrane. It carries out the reaction a lipid A + a 1,2-diacyl-sn-glycero-3-phosphocholine = a hepta-acyl lipid A + a 2-acyl-sn-glycero-3-phosphocholine. The catalysed reaction is a lipid IVA + a 1,2-diacyl-sn-glycero-3-phosphocholine = a lipid IVB + a 2-acyl-sn-glycero-3-phosphocholine. The enzyme catalyses a lipid IIA + a 1,2-diacyl-sn-glycero-3-phosphocholine = a lipid IIB + a 2-acyl-sn-glycero-3-phosphocholine. Its function is as follows. Transfers a fatty acid residue from the sn-1 position of a phospholipid to the N-linked hydroxyfatty acid chain on the proximal unit of lipid A or its precursors. This is Lipid A acyltransferase PagP from Citrobacter rodentium (strain ICC168) (Citrobacter freundii biotype 4280).